We begin with the raw amino-acid sequence, 247 residues long: Fasciclin-like arabinogalactan protein 13 (247 aa).

The signal sequence occupies residues 1–25 (MATTPLLLLLLTAVFLSTEITAQRA). The FAS1 domain maps to 34 to 179 (PINITAILEK…LAVYVVDMVL (146 aa)). N-linked (GlcNAc...) asparagine glycans are attached at residues Asn36, Asn55, Asn68, Asn141, and Asn150. The interval 189–228 (KISPMAPPPKSKSPDVSDDSESSKKAAAPSESEKSGSGEM) is disordered. Residue Gly224 is the site of GPI-anchor amidated glycine attachment. The propeptide at 225 to 247 (SGEMNTGLGLGLGLVVLCLKFLL) is removed in mature form.

Belongs to the fasciclin-like AGP family.

It is found in the cell membrane. Its function is as follows. May be a cell surface adhesion protein. This chain is Fasciclin-like arabinogalactan protein 13 (FLA13), found in Arabidopsis thaliana (Mouse-ear cress).